The chain runs to 198 residues: Glycerol-3-phosphate acyltransferase (198 aa).

6 consecutive transmembrane segments (helical) span residues methionine 1 to alanine 21, isoleucine 53 to leucine 73, tryptophan 79 to tryptophan 99, isoleucine 111 to isoleucine 131, isoleucine 136 to phenylalanine 156, and glycine 158 to tryptophan 178.

It belongs to the PlsY family. In terms of assembly, probably interacts with PlsX.

It localises to the cell inner membrane. It catalyses the reaction an acyl phosphate + sn-glycerol 3-phosphate = a 1-acyl-sn-glycero-3-phosphate + phosphate. It functions in the pathway lipid metabolism; phospholipid metabolism. Catalyzes the transfer of an acyl group from acyl-phosphate (acyl-PO(4)) to glycerol-3-phosphate (G3P) to form lysophosphatidic acid (LPA). This enzyme utilizes acyl-phosphate as fatty acyl donor, but not acyl-CoA or acyl-ACP. This chain is Glycerol-3-phosphate acyltransferase, found in Prochlorococcus marinus (strain NATL1A).